Here is a 316-residue protein sequence, read N- to C-terminus: 4-hydroxy-3-methylbut-2-enyl diphosphate reductase (316 aa).

Cys-12 contacts [4Fe-4S] cluster. (2E)-4-hydroxy-3-methylbut-2-enyl diphosphate-binding residues include His-41 and His-74. Residues His-41 and His-74 each coordinate dimethylallyl diphosphate. The isopentenyl diphosphate site is built by His-41 and His-74. Cys-96 contributes to the [4Fe-4S] cluster binding site. His-124 lines the (2E)-4-hydroxy-3-methylbut-2-enyl diphosphate pocket. His-124 is a binding site for dimethylallyl diphosphate. His-124 is a binding site for isopentenyl diphosphate. Glu-126 functions as the Proton donor in the catalytic mechanism. Thr-167 contributes to the (2E)-4-hydroxy-3-methylbut-2-enyl diphosphate binding site. Cys-197 contributes to the [4Fe-4S] cluster binding site. 4 residues coordinate (2E)-4-hydroxy-3-methylbut-2-enyl diphosphate: Ser-225, Ser-226, Asn-227, and Ser-269. The dimethylallyl diphosphate site is built by Ser-225, Ser-226, Asn-227, and Ser-269. The isopentenyl diphosphate site is built by Ser-225, Ser-226, Asn-227, and Ser-269.

This sequence belongs to the IspH family. As to quaternary structure, homodimer. [4Fe-4S] cluster is required as a cofactor.

It carries out the reaction isopentenyl diphosphate + 2 oxidized [2Fe-2S]-[ferredoxin] + H2O = (2E)-4-hydroxy-3-methylbut-2-enyl diphosphate + 2 reduced [2Fe-2S]-[ferredoxin] + 2 H(+). The enzyme catalyses dimethylallyl diphosphate + 2 oxidized [2Fe-2S]-[ferredoxin] + H2O = (2E)-4-hydroxy-3-methylbut-2-enyl diphosphate + 2 reduced [2Fe-2S]-[ferredoxin] + 2 H(+). Its pathway is isoprenoid biosynthesis; dimethylallyl diphosphate biosynthesis; dimethylallyl diphosphate from (2E)-4-hydroxy-3-methylbutenyl diphosphate: step 1/1. The protein operates within isoprenoid biosynthesis; isopentenyl diphosphate biosynthesis via DXP pathway; isopentenyl diphosphate from 1-deoxy-D-xylulose 5-phosphate: step 6/6. Catalyzes the conversion of 1-hydroxy-2-methyl-2-(E)-butenyl 4-diphosphate (HMBPP) into a mixture of isopentenyl diphosphate (IPP) and dimethylallyl diphosphate (DMAPP). Acts in the terminal step of the DOXP/MEP pathway for isoprenoid precursor biosynthesis. The sequence is that of 4-hydroxy-3-methylbut-2-enyl diphosphate reductase from Salmonella schwarzengrund (strain CVM19633).